We begin with the raw amino-acid sequence, 630 residues long: Replication protein E1 (630 aa).

Residues 26–46 form a disordered region; that stretch reads RKTGDTISDDESEEENETDTD. Positions 32-46 are enriched in acidic residues; the sequence is ISDDESEEENETDTD. The short motif at 86 to 88 is the Nuclear localization signal element; the sequence is KRK. At S92 the chain carries Phosphoserine; by host. The segment at 136 to 166 is disordered; the sequence is EKGNGCGSSQNGGSQNSNCSEHSVSNMDIDT. The segment covering 142-155 has biased composition (low complexity); sequence GSSQNGGSQNSNCS. Positions 156–166 are enriched in polar residues; sequence EHSVSNMDIDT. The DNA-binding region stretch occupies residues 167–333; sequence NMETPTHQLQ…QTQLQHSLQD (167 aa). One can recognise an SF3 helicase domain in the interval 432–582; the sequence is VDFISFLSYF…FPLDNNGNPV (151 aa). 458-465 is a binding site for ATP; that stretch reads GPPNTGKS. K539 participates in a covalent cross-link: Glycyl lysine isopeptide (Lys-Gly) (interchain with G-Cter in SUMO).

Belongs to the papillomaviridae E1 protein family. In terms of assembly, can form hexamers. Interacts with E2 protein; this interaction increases E1 DNA binding specificity. Interacts with host DNA polymerase subunit POLA2. Interacts with host single stranded DNA-binding protein RPA1. Interacts with host TOP1; this interaction stimulates the enzymatic activity of TOP1. Phosphorylated. Post-translationally, sumoylated.

It localises to the host nucleus. The catalysed reaction is Couples ATP hydrolysis with the unwinding of duplex DNA by translocating in the 3'-5' direction.. It carries out the reaction ATP + H2O = ADP + phosphate + H(+). Its function is as follows. ATP-dependent DNA 3'-5' helicase required for initiation of viral DNA replication. It forms a complex with the viral E2 protein. The E1-E2 complex binds to the replication origin which contains binding sites for both proteins. During the initial step, a dimer of E1 interacts with a dimer of protein E2 leading to a complex that binds the viral origin of replication with high specificity. Then, a second dimer of E1 displaces the E2 dimer in an ATP-dependent manner to form the E1 tetramer. Following this, two E1 monomers are added to each half of the site, which results in the formation of two E1 trimers on the viral ori. Subsequently, two hexamers will be created. The double hexamer acts as a bi-directional helicase machinery and unwinds the viral DNA and then recruits the host DNA polymerase to start replication. The chain is Replication protein E1 from Homo sapiens (Human).